The following is a 135-amino-acid chain: Holo-[acyl-carrier-protein] synthase (135 aa).

Mg(2+)-binding residues include D7 and E57.

Belongs to the P-Pant transferase superfamily. AcpS family. Mg(2+) serves as cofactor.

Its subcellular location is the cytoplasm. It catalyses the reaction apo-[ACP] + CoA = holo-[ACP] + adenosine 3',5'-bisphosphate + H(+). Transfers the 4'-phosphopantetheine moiety from coenzyme A to a Ser of acyl-carrier-protein. This Corynebacterium glutamicum (strain R) protein is Holo-[acyl-carrier-protein] synthase.